The following is a 622-amino-acid chain: E3 ubiquitin-protein ligase hrd-1 (622 aa).

The signal sequence occupies residues 1–23 (MRVSAGLMIGGSCVATAATVLNA). At 24–41 (FVINKQFYPSIVYLSKSN) the chain is on the lumenal side. Residues 42 to 62 (ASMAVLYFQGIVLVYLMFQLL) traverse the membrane as a helical segment. The Cytoplasmic portion of the chain corresponds to 63-99 (KSILFGDLRAAEAEHLSERTWHAVLETCLAFTVFRDD). Residues 100–120 (FSAMFVMQFIGLLFIKCFHWL) form a helical membrane-spanning segment. Topologically, residues 121 to 141 (ADDRVDMMERSPVITLRFHLR) are lumenal. The chain crosses the membrane as a helical span at residues 142-162 (MMTVLAALGFADSYFVSSAYF). Residues 163-170 (STITKGAS) are Cytoplasmic-facing. A helical membrane pass occupies residues 171 to 191 (SQIVFGFEYAILLALVLHVTI). Residues 192-215 (KYLLHMHDLRNPQSWDNKAVYLLY) lie on the Lumenal side of the membrane. A helical transmembrane segment spans residues 216 to 236 (AELLINLIRCVLYGFFAVIML). The Cytoplasmic segment spans residues 237–622 (RVHTFPLFSV…RFPPPNPEHE (386 aa)). Residues 292–333 (CIICREEMTVESSPKRLPCSHVFHAHCLRSWFQRQQTCPTCR) form an RING-type; atypical zinc finger. Residues 436-445 (MPPPPIPQPN) are compositionally biased toward pro residues. Disordered stretches follow at residues 436–463 (MPPP…PNFD) and 514–622 (PVPT…PEHE). Positions 526–538 (ATASSVPTSVPSE) are enriched in low complexity. Residues 562-577 (FNDTQSTSTPSTSAGP) are compositionally biased toward polar residues. Residues 579–596 (PSLTPSTSSVPSTSSVRT) are compositionally biased toward low complexity.

Belongs to the HRD1 family. In terms of assembly, homodimer.

The protein localises to the endoplasmic reticulum membrane. The enzyme catalyses S-ubiquitinyl-[E2 ubiquitin-conjugating enzyme]-L-cysteine + [acceptor protein]-L-lysine = [E2 ubiquitin-conjugating enzyme]-L-cysteine + N(6)-ubiquitinyl-[acceptor protein]-L-lysine.. The protein operates within protein modification; protein ubiquitination. Its function is as follows. Acts as an E3 ubiquitin-protein ligase which accepts ubiquitin specifically from endoplasmic reticulum-associated ubc-7 E2 ligase and transfers it to substrates, promoting their degradation. Component of the endoplasmic reticulum quality control (ERQC) system, which is also called the ER-associated degradation (ERAD) system, involved in ubiquitin-dependent degradation of misfolded endoplasmic reticulum proteins. Also promotes the degradation of normal but naturally short-lived proteins. Protects cells from ER stress-induced apoptosis. Thought to play a role together with hsp-3 in developmental growth and function of intestinal cells and to play a role together with hsp-4 in gonad formation. This is E3 ubiquitin-protein ligase hrd-1 from Caenorhabditis briggsae.